The sequence spans 224 residues: MSFLSSVLYTLSNINMIFYIVAFLFGGIPFGWLLVKVLYKVDIRDIGSKSIGATNVYRAVKEIDESKAKYLSILTIILDATKGLIVVLGAKLLGMSYETQWSIALLAILGHCYSPYLGFKGGKGVATAIGSVLLLIPVEGICGLIIWGIVGKVFKISSISSLIGVLGTIGLTFVLPYILPLPDCISIIKQINTHTPLVLIGLFIFYTHIPNIKRLFSGEENKVL.

6 helical membrane passes run 14 to 34 (INMI…GWLL), 70 to 90 (YLSI…VLGA), 99 to 119 (TQWS…YLGF), 129 to 149 (IGSV…IWGI), 162 to 182 (LIGV…LPLP), and 185 to 205 (ISII…LFIF).

This sequence belongs to the PlsY family. In terms of assembly, probably interacts with PlsX.

The protein resides in the cell inner membrane. It carries out the reaction an acyl phosphate + sn-glycerol 3-phosphate = a 1-acyl-sn-glycero-3-phosphate + phosphate. Its pathway is lipid metabolism; phospholipid metabolism. Its function is as follows. Catalyzes the transfer of an acyl group from acyl-phosphate (acyl-PO(4)) to glycerol-3-phosphate (G3P) to form lysophosphatidic acid (LPA). This enzyme utilizes acyl-phosphate as fatty acyl donor, but not acyl-CoA or acyl-ACP. The sequence is that of Glycerol-3-phosphate acyltransferase from Helicobacter hepaticus (strain ATCC 51449 / 3B1).